The chain runs to 267 residues: 2-keto-3-deoxy-L-rhamnonate aldolase (267 aa).

The active-site Proton acceptor is the His49. Gln151 serves as a coordination point for substrate. Glu153 is a Mg(2+) binding site. The substrate site is built by Ala178 and Asp179. Asp179 contacts Mg(2+).

It belongs to the HpcH/HpaI aldolase family. KDR aldolase subfamily. In terms of assembly, homohexamer. It depends on Mg(2+) as a cofactor. Ni(2+) is required as a cofactor.

It catalyses the reaction 2-dehydro-3-deoxy-L-rhamnonate = (S)-lactaldehyde + pyruvate. The catalysed reaction is D-glyceraldehyde + 3-hydroxypyruvate = (3R,4S,5R)-3,4,5,6-tetrahydroxy-2-oxohexanoate. The enzyme catalyses D-glyceraldehyde + 3-hydroxypyruvate = 2-dehydro-D-gluconate. It carries out the reaction D-glyceraldehyde + 3-hydroxypyruvate = 2-dehydro-D-galactonate. It catalyses the reaction D-glyceraldehyde + pyruvate = 2-dehydro-3-deoxy-L-galactonate. The catalysed reaction is 2-dehydro-3-deoxy-D-gluconate = D-glyceraldehyde + pyruvate. Functionally, catalyzes the reversible retro-aldol cleavage of 2-keto-3-deoxy-L-rhamnonate (KDR) to pyruvate and lactaldehyde. 2-keto-3-deoxy-L-mannonate, 2-keto-3-deoxy-L-lyxonate and 4-hydroxy-2-ketoheptane-1,7-dioate (HKHD) are also reasonably good substrates, although 2-keto-3-deoxy-L-rhamnonate is likely to be the physiological substrate. In vitro, can catalyze the aldolisation reaction between hydroxypyruvate (HPA) or pyruvate (PA) and D-glyceraldehyde (D-GA). The condensation of hydroxypyruvate and D-glyceraldehyde produces (3R,4S,5R)-3,4,5,6-tetrahydroxy-2-oxohexanoate as the major product, 2-dehydro-D-gluconate and 2-dehydro-D-galactonate. The condensation of pyruvate and D-glyceraldehyde produces 2-dehydro-3-deoxy-L-galactonate as the major product and 2-dehydro-3-deoxy-D-gluconate. This Escherichia coli (strain K12) protein is 2-keto-3-deoxy-L-rhamnonate aldolase (rhmA).